The primary structure comprises 467 residues: ATP-dependent protease ATPase subunit HslU (467 aa).

Residues Val22 and 64–69 (GVGKTE) each bind ATP. The tract at residues 149 to 192 (QTNNPLESLFGGAIPNFGQNNEDEEEPPTEEIKTKRSEIKRQLE) is disordered. The segment covering 178–192 (EEIKTKRSEIKRQLE) has biased composition (basic and acidic residues). 3 residues coordinate ATP: Asp280, Glu345, and Arg417.

It belongs to the ClpX chaperone family. HslU subfamily. As to quaternary structure, a double ring-shaped homohexamer of HslV is capped on each side by a ring-shaped HslU homohexamer. The assembly of the HslU/HslV complex is dependent on binding of ATP.

The protein resides in the cytoplasm. Functionally, ATPase subunit of a proteasome-like degradation complex; this subunit has chaperone activity. The binding of ATP and its subsequent hydrolysis by HslU are essential for unfolding of protein substrates subsequently hydrolyzed by HslV. HslU recognizes the N-terminal part of its protein substrates and unfolds these before they are guided to HslV for hydrolysis. The protein is ATP-dependent protease ATPase subunit HslU of Staphylococcus aureus (strain MW2).